The chain runs to 61 residues: Metallothionein-1D (61 aa).

Positions 1 to 29 (MDPNCSCSTGGSCSCATSCTCKACRCTSC) are beta. A divalent metal cation is bound by residues C5, C7, C13, C15, C19, C21, C24, C26, C29, C33, C34, C36, C37, C41, C44, C48, C50, C57, C59, and C60. The tract at residues 30–61 (KKSCCSCCPAGCAKCAQGCICKGASDKCSCCA) is alpha.

Belongs to the metallothionein superfamily. Type 1 family. Monomer.

Metallothioneins have a high content of cysteine residues that bind various heavy metals; these proteins are transcriptionally regulated by both heavy metals and glucocorticoids. The chain is Metallothionein-1D (MT1D) from Sus scrofa (Pig).